A 197-amino-acid polypeptide reads, in one-letter code: dITP/XTP pyrophosphatase (197 aa).

Position 9 to 14 (9 to 14 (TNNLNK)) interacts with substrate. Mg(2+)-binding residues include E42 and D71. The Proton acceptor role is filled by D71. Residues S72, 153–156 (FGYD), K176, and 181–182 (HR) contribute to the substrate site.

The protein belongs to the HAM1 NTPase family. As to quaternary structure, homodimer. Requires Mg(2+) as cofactor.

The catalysed reaction is XTP + H2O = XMP + diphosphate + H(+). It carries out the reaction dITP + H2O = dIMP + diphosphate + H(+). The enzyme catalyses ITP + H2O = IMP + diphosphate + H(+). Its function is as follows. Pyrophosphatase that catalyzes the hydrolysis of nucleoside triphosphates to their monophosphate derivatives, with a high preference for the non-canonical purine nucleotides XTP (xanthosine triphosphate), dITP (deoxyinosine triphosphate) and ITP. Seems to function as a house-cleaning enzyme that removes non-canonical purine nucleotides from the nucleotide pool, thus preventing their incorporation into DNA/RNA and avoiding chromosomal lesions. This chain is dITP/XTP pyrophosphatase, found in Leptospira interrogans serogroup Icterohaemorrhagiae serovar copenhageni (strain Fiocruz L1-130).